Consider the following 430-residue polypeptide: Nitroalkane oxidase (430 aa).

Residues 132–135 (LVFS), 140–142 (VAN), 170–172 (WAT), arginine 301, glutamine 311, 372–376 (NAVGI), and 397–401 (IFDGG) contribute to the FAD site. Catalysis depends on aspartate 399, which acts as the Proton acceptor.

This sequence belongs to the acyl-CoA dehydrogenase family. As to quaternary structure, homotetramer. FAD serves as cofactor.

It carries out the reaction a primary nitroalkane + O2 + H2O = an aldehyde + nitrite + H2O2 + H(+). The catalysed reaction is a secondary nitroalkane + O2 + H2O = a ketone + nitrite + H2O2 + H(+). Its function is as follows. Nitroalkane oxidase (NAO) catalyzes the oxidation of nitroalkanes to the corresponding aldehydes or ketones with the release of nitrite and the consumption of molecular oxygen to yield hydrogen peroxide. NAO is unusual, since it catalyzes substrate oxidation by removing a substrate proton to form a carbanion intermediate. Prefers longer nitroalkanes, with 1-nitrohexane having the highest activity. This Podospora anserina (strain S / ATCC MYA-4624 / DSM 980 / FGSC 10383) (Pleurage anserina) protein is Nitroalkane oxidase.